Here is a 183-residue protein sequence, read N- to C-terminus: ATP synthase subunit delta (183 aa).

It belongs to the ATPase delta chain family. In terms of assembly, F-type ATPases have 2 components, F(1) - the catalytic core - and F(0) - the membrane proton channel. F(1) has five subunits: alpha(3), beta(3), gamma(1), delta(1), epsilon(1). F(0) has three main subunits: a(1), b(2) and c(10-14). The alpha and beta chains form an alternating ring which encloses part of the gamma chain. F(1) is attached to F(0) by a central stalk formed by the gamma and epsilon chains, while a peripheral stalk is formed by the delta and b chains.

It localises to the cell inner membrane. Its function is as follows. F(1)F(0) ATP synthase produces ATP from ADP in the presence of a proton or sodium gradient. F-type ATPases consist of two structural domains, F(1) containing the extramembraneous catalytic core and F(0) containing the membrane proton channel, linked together by a central stalk and a peripheral stalk. During catalysis, ATP synthesis in the catalytic domain of F(1) is coupled via a rotary mechanism of the central stalk subunits to proton translocation. In terms of biological role, this protein is part of the stalk that links CF(0) to CF(1). It either transmits conformational changes from CF(0) to CF(1) or is implicated in proton conduction. This Maridesulfovibrio salexigens (strain ATCC 14822 / DSM 2638 / NCIMB 8403 / VKM B-1763) (Desulfovibrio salexigens) protein is ATP synthase subunit delta.